Consider the following 880-residue polypeptide: Alanine--tRNA ligase (880 aa).

Zn(2+)-binding residues include histidine 566, histidine 570, cysteine 668, and histidine 672.

It belongs to the class-II aminoacyl-tRNA synthetase family. The cofactor is Zn(2+).

The protein resides in the cytoplasm. The catalysed reaction is tRNA(Ala) + L-alanine + ATP = L-alanyl-tRNA(Ala) + AMP + diphosphate. Catalyzes the attachment of alanine to tRNA(Ala) in a two-step reaction: alanine is first activated by ATP to form Ala-AMP and then transferred to the acceptor end of tRNA(Ala). Also edits incorrectly charged Ser-tRNA(Ala) and Gly-tRNA(Ala) via its editing domain. In Trichormus variabilis (strain ATCC 29413 / PCC 7937) (Anabaena variabilis), this protein is Alanine--tRNA ligase.